Consider the following 95-residue polypeptide: Large ribosomal subunit protein bL25 (95 aa).

This sequence belongs to the bacterial ribosomal protein bL25 family. As to quaternary structure, part of the 50S ribosomal subunit; part of the 5S rRNA/L5/L18/L25 subcomplex. Contacts the 5S rRNA. Binds to the 5S rRNA independently of L5 and L18.

This is one of the proteins that binds to the 5S RNA in the ribosome where it forms part of the central protuberance. This Shewanella baltica (strain OS223) protein is Large ribosomal subunit protein bL25.